Consider the following 29-residue polypeptide: Cytochrome c oxidase subunit 7A2, mitochondrial (29 aa).

Lys10 is modified (N6-acetyllysine).

It belongs to the cytochrome c oxidase VIIa family. As to quaternary structure, component of the cytochrome c oxidase (complex IV, CIV), a multisubunit enzyme composed of 14 subunits. The complex is composed of a catalytic core of 3 subunits MT-CO1, MT-CO2 and MT-CO3, encoded in the mitochondrial DNA, and 11 supernumerary subunits COX4I, COX5A, COX5B, COX6A, COX6B, COX6C, COX7A, COX7B, COX7C, COX8 and NDUFA4, which are encoded in the nuclear genome. The complex exists as a monomer or a dimer and forms supercomplexes (SCs) in the inner mitochondrial membrane with NADH-ubiquinone oxidoreductase (complex I, CI) and ubiquinol-cytochrome c oxidoreductase (cytochrome b-c1 complex, complex III, CIII), resulting in different assemblies (supercomplex SCI(1)III(2)IV(1) and megacomplex MCI(2)III(2)IV(2)). Interacts with PET100.

Its subcellular location is the mitochondrion inner membrane. The protein operates within energy metabolism; oxidative phosphorylation. In terms of biological role, component of the cytochrome c oxidase, the last enzyme in the mitochondrial electron transport chain which drives oxidative phosphorylation. The respiratory chain contains 3 multisubunit complexes succinate dehydrogenase (complex II, CII), ubiquinol-cytochrome c oxidoreductase (cytochrome b-c1 complex, complex III, CIII) and cytochrome c oxidase (complex IV, CIV), that cooperate to transfer electrons derived from NADH and succinate to molecular oxygen, creating an electrochemical gradient over the inner membrane that drives transmembrane transport and the ATP synthase. Cytochrome c oxidase is the component of the respiratory chain that catalyzes the reduction of oxygen to water. Electrons originating from reduced cytochrome c in the intermembrane space (IMS) are transferred via the dinuclear copper A center (CU(A)) of subunit 2 and heme A of subunit 1 to the active site in subunit 1, a binuclear center (BNC) formed by heme A3 and copper B (CU(B)). The BNC reduces molecular oxygen to 2 water molecules using 4 electrons from cytochrome c in the IMS and 4 protons from the mitochondrial matrix. The chain is Cytochrome c oxidase subunit 7A2, mitochondrial (COX7A2) from Canis lupus familiaris (Dog).